We begin with the raw amino-acid sequence, 414 residues long: Sensor protein CutS (414 aa).

The span at M1–T15 shows a compositional bias: pro residues. The tract at residues M1 to A21 is disordered. The next 2 membrane-spanning stretches (helical) occupy residues L37–L57 and S121–G141. Residues R142–T194 form the HAMP domain. The Histidine kinase domain maps to N202–V414. Position 205 is a phosphohistidine; by autocatalysis (H205).

It is found in the cell membrane. The catalysed reaction is ATP + protein L-histidine = ADP + protein N-phospho-L-histidine.. Member of the two-component regulatory system CutS/CutR, involved in the regulation of copper metabolism. This Streptomyces coelicolor (strain ATCC BAA-471 / A3(2) / M145) protein is Sensor protein CutS (cutS).